The chain runs to 216 residues: 3-keto-L-gulonate-6-phosphate decarboxylase UlaD (216 aa).

Substrate is bound at residue Asp11. 2 residues coordinate Mg(2+): Glu33 and Asp62. Arg192 contacts substrate.

Belongs to the HPS/KGPDC family. KGPDC subfamily. Homodimer. It depends on Mg(2+) as a cofactor.

It catalyses the reaction 3-dehydro-L-gulonate 6-phosphate + H(+) = L-xylulose 5-phosphate + CO2. It functions in the pathway cofactor degradation; L-ascorbate degradation; D-xylulose 5-phosphate from L-ascorbate: step 2/4. Functionally, catalyzes the decarboxylation of 3-keto-L-gulonate-6-P into L-xylulose-5-P. Is involved in the anaerobic L-ascorbate utilization. The chain is 3-keto-L-gulonate-6-phosphate decarboxylase UlaD from Escherichia coli O139:H28 (strain E24377A / ETEC).